The following is a 106-amino-acid chain: ATP-dependent Clp protease adapter protein ClpS (106 aa).

Positions 1-13 (MPRKTSHEHDHGL) are enriched in basic and acidic residues. The tract at residues 1–21 (MPRKTSHEHDHGLVVETSKPE) is disordered.

This sequence belongs to the ClpS family. Binds to the N-terminal domain of the chaperone ClpA.

Its function is as follows. Involved in the modulation of the specificity of the ClpAP-mediated ATP-dependent protein degradation. This chain is ATP-dependent Clp protease adapter protein ClpS, found in Xanthomonas campestris pv. campestris (strain 8004).